Consider the following 311-residue polypeptide: L-lactate dehydrogenase (311 aa).

NAD(+)-binding positions include valine 12, aspartate 33, lysine 38, tyrosine 63, and 77 to 78 (GA). Residues glutamine 80 and arginine 86 each contribute to the substrate site. NAD(+)-binding positions include serine 99, 116–118 (VTN), and serine 141. Position 118 to 121 (118 to 121 (NPVD)) interacts with substrate. 146 to 149 (DSSR) contacts substrate. Residues arginine 151 and histidine 166 each coordinate beta-D-fructose 1,6-bisphosphate. Histidine 173 serves as the catalytic Proton acceptor. Tyrosine 219 bears the Phosphotyrosine mark. Threonine 228 lines the substrate pocket.

The protein belongs to the LDH/MDH superfamily. LDH family. Homotetramer.

It is found in the cytoplasm. It catalyses the reaction (S)-lactate + NAD(+) = pyruvate + NADH + H(+). Its pathway is fermentation; pyruvate fermentation to lactate; (S)-lactate from pyruvate: step 1/1. Allosterically activated by fructose 1,6-bisphosphate (FBP). In terms of biological role, catalyzes the conversion of lactate to pyruvate. This Thermoanaerobacterium saccharolyticum (strain DSM 8691 / JW/SL-YS485) protein is L-lactate dehydrogenase.